Here is an 857-residue protein sequence, read N- to C-terminus: Alanine--tRNA ligase (857 aa).

Zn(2+)-binding residues include histidine 556, histidine 560, cysteine 658, and histidine 662.

It belongs to the class-II aminoacyl-tRNA synthetase family. Zn(2+) serves as cofactor.

It localises to the cytoplasm. The catalysed reaction is tRNA(Ala) + L-alanine + ATP = L-alanyl-tRNA(Ala) + AMP + diphosphate. Functionally, catalyzes the attachment of alanine to tRNA(Ala) in a two-step reaction: alanine is first activated by ATP to form Ala-AMP and then transferred to the acceptor end of tRNA(Ala). Also edits incorrectly charged Ser-tRNA(Ala) and Gly-tRNA(Ala) via its editing domain. The protein is Alanine--tRNA ligase of Sulfurovum sp. (strain NBC37-1).